Here is a 139-residue protein sequence, read N- to C-terminus: Dehydrin DHN1 (139 aa).

Residues 1–139 are disordered; that stretch reads MEYQGQHGHA…IKEKLPGGQH (139 aa). The segment covering 23-42 has biased composition (gly residues); sequence GHGGFTGGPTGTHGAAGVGG. Over residues 49–58 the composition is skewed to basic and acidic residues; that stretch reads RDGHKTDGVL. Residues 59-68 show a composition bias toward low complexity; that stretch reads RRSGSSSSSS. Positions 83-98 are enriched in basic and acidic residues; it reads KEKIKEKLPGGAHKDA. The span at 99–109 shows a compositional bias: low complexity; it reads AGQQQQTAMAG. The segment covering 120-139 has biased composition (basic and acidic residues); sequence TGEKKGVMDKIKEKLPGGQH.

Belongs to the plant dehydrin family.

The polypeptide is Dehydrin DHN1 (DHN1) (Hordeum vulgare (Barley)).